The following is an 82-amino-acid chain: ATP synthase subunit c (82 aa).

Helical transmembrane passes span Ala7–Gly27 and Phe57–Ala77.

The protein belongs to the ATPase C chain family. As to quaternary structure, F-type ATPases have 2 components, F(1) - the catalytic core - and F(0) - the membrane proton channel. F(1) has five subunits: alpha(3), beta(3), gamma(1), delta(1), epsilon(1). F(0) has four main subunits: a(1), b(1), b'(1) and c(10-14). The alpha and beta chains form an alternating ring which encloses part of the gamma chain. F(1) is attached to F(0) by a central stalk formed by the gamma and epsilon chains, while a peripheral stalk is formed by the delta, b and b' chains.

The protein localises to the cellular thylakoid membrane. F(1)F(0) ATP synthase produces ATP from ADP in the presence of a proton or sodium gradient. F-type ATPases consist of two structural domains, F(1) containing the extramembraneous catalytic core and F(0) containing the membrane proton channel, linked together by a central stalk and a peripheral stalk. During catalysis, ATP synthesis in the catalytic domain of F(1) is coupled via a rotary mechanism of the central stalk subunits to proton translocation. Its function is as follows. Key component of the F(0) channel; it plays a direct role in translocation across the membrane. A homomeric c-ring of between 10-14 subunits forms the central stalk rotor element with the F(1) delta and epsilon subunits. The polypeptide is ATP synthase subunit c (Prochlorococcus marinus (strain NATL1A)).